Reading from the N-terminus, the 617-residue chain is pH-sensitive chloride channel 2 (617 aa).

The first 28 residues, 1 to 28 (MHSPGAAAYVFLQCLVALVAAVIAQSGA), serve as a signal peptide directing secretion. The Extracellular portion of the chain corresponds to 29–387 (DQPPTTVVEV…VHLAREMGFY (359 aa)). Residue Asn57 is glycosylated (N-linked (GlcNAc...) asparagine). The segment covering 82–96 (TVSVDSSSTTTVAST) has biased composition (low complexity). A disordered region spans residues 82 to 110 (TVSVDSSSTTTVASTQEPTSTTERTMSPE). Positions 97–106 (QEPTSTTERT) are enriched in polar residues. The N-linked (GlcNAc...) asparagine glycan is linked to Asn130. A compositionally biased stretch (basic and acidic residues) spans 131 to 147 (ATDDNRPDAKSSGKDSE). Residues 131-155 (ATDDNRPDAKSSGKDSECPTLEGAD) are disordered. Asn184, Asn234, Asn351, and Asn370 each carry an N-linked (GlcNAc...) asparagine glycan. Residues 388 to 408 (MMDYFIPSIMLVAISWVTFWL) form a helical membrane-spanning segment. The Cytoplasmic segment spans residues 409 to 414 (QADQSA). Residues 415–434 (PRITLGTSTMLTFITLASAQ) traverse the membrane as a helical segment. Over 435 to 447 (GKTLPKVSYIKAS) the chain is Extracellular. A helical transmembrane segment spans residues 448–468 (EIWFLGCTGFIFGSLVEFAFV). Residues 469-596 (NTIWRRKRNV…VAIWIDKRSR (128 aa)) are Cytoplasmic-facing. Residues 597–617 (FVFPIAFVIFNIFYWTFVYYV) form a helical membrane-spanning segment.

It belongs to the ligand-gated ion channel (TC 1.A.9) family.

It is found in the cell membrane. The enzyme catalyses chloride(in) = chloride(out). Functionally, ligand and pH-gated channel that mediates chloride transport in the mid-gut and thereby may function in larval metabolism and fluid homeostasis. Channel opening is triggered by zinc binding or, to a lesser extent, an increase in extracellular pH. This chain is pH-sensitive chloride channel 2, found in Anopheles gambiae (African malaria mosquito).